The sequence spans 82 residues: Sulfur carrier protein TusA (82 aa).

Cys-19 acts as the Cysteine persulfide intermediate in catalysis.

Belongs to the sulfur carrier protein TusA family.

It localises to the cytoplasm. Functionally, sulfur carrier protein which probably makes part of a sulfur-relay system. The polypeptide is Sulfur carrier protein TusA (Vibrio cholerae serotype O1 (strain ATCC 39541 / Classical Ogawa 395 / O395)).